A 198-amino-acid polypeptide reads, in one-letter code: Recombination protein RecR (198 aa).

Residues 56 to 71 (CKVCGNFSEEDECVIC) form a C4-type zinc finger. The Toprim domain occupies 79 to 174 (GVICVVEEPK…RVSKLASGLP (96 aa)).

Belongs to the RecR family.

May play a role in DNA repair. It seems to be involved in an RecBC-independent recombinational process of DNA repair. It may act with RecF and RecO. This is Recombination protein RecR from Tropheryma whipplei (strain Twist) (Whipple's bacillus).